The primary structure comprises 312 residues: Apulose-4-phosphate transketolase subunit B (312 aa).

It belongs to the transketolase family. In terms of assembly, probable heterodimer composed of AptA and AptB. Thiamine diphosphate is required as a cofactor.

It catalyses the reaction apulose 4-phosphate + D-glyceraldehyde 3-phosphate = D-xylulose 5-phosphate + dihydroxyacetone phosphate. Its pathway is carbohydrate metabolism. In terms of biological role, involved in catabolism of D-apiose. Catalyzes the transfer of the glycolaldehyde group from apulose-4-phosphate to D-glyceraldehyde 3-phosphate, generating dihydroxyacetone phosphate and D-xylulose-5-phosphate. This chain is Apulose-4-phosphate transketolase subunit B, found in Phocaeicola vulgatus (strain ATCC 8482 / DSM 1447 / JCM 5826 / CCUG 4940 / NBRC 14291 / NCTC 11154) (Bacteroides vulgatus).